The following is a 56-amino-acid chain: Ovomucoid (56 aa).

The 51-residue stretch at 6–56 (VDCSDHPKPACLQEQKPLCGSDNKTYDNKCSFCNAVVDSNGTLTLSHFGKC) folds into the Kazal-like domain. 3 cysteine pairs are disulfide-bonded: Cys-8–Cys-38, Cys-16–Cys-35, and Cys-24–Cys-56. Residue Asn-45 is glycosylated (N-linked (GlcNAc...) asparagine).

Its subcellular location is the secreted. This chain is Ovomucoid, found in Pipile pipile (Trinidad piping guan).